We begin with the raw amino-acid sequence, 224 residues long: Cutinase 1 (224 aa).

Residues 1–16 (MKFLSVLSLAITLAAA) form the signal peptide. A disulfide bridge connects residues Cys46 and Cys125. Ser136 acts as the Nucleophile in catalysis. Cys187 and Cys194 form a disulfide bridge. Asp191 is an active-site residue. His204 functions as the Proton donor/acceptor in the catalytic mechanism.

Belongs to the cutinase family. Post-translationally, the 2 disulfide bonds play a critical role in holding the catalytic residues in juxta-position; reduction of the disulfide bridges results in the complete inactivation of the enzyme. The N-terminus is blocked.

The protein resides in the secreted. It catalyses the reaction cutin + H2O = cutin monomers.. Its activity is regulated as follows. Inhibited by diisopropyl fluorophosphate (DFP). Catalyzes the hydrolysis of complex carboxylic polyesters found in the cell wall of plants. Degrades cutin, a macromolecule that forms the structure of the plant cuticle. Allows pathogenic fungi to penetrate through the cuticular barrier into the host plant during the initial stage of fungal infection. This Colletotrichum gloeosporioides (Anthracnose fungus) protein is Cutinase 1 (CUTA).